Reading from the N-terminus, the 222-residue chain is ATP-dependent Clp protease proteolytic subunit 1 (222 aa).

Ser121 (nucleophile) is an active-site residue. Residue His146 is part of the active site.

Belongs to the peptidase S14 family. As to quaternary structure, fourteen ClpP subunits assemble into 2 heptameric rings which stack back to back to give a disk-like structure with a central cavity, resembling the structure of eukaryotic proteasomes.

The protein resides in the cytoplasm. It catalyses the reaction Hydrolysis of proteins to small peptides in the presence of ATP and magnesium. alpha-casein is the usual test substrate. In the absence of ATP, only oligopeptides shorter than five residues are hydrolyzed (such as succinyl-Leu-Tyr-|-NHMec, and Leu-Tyr-Leu-|-Tyr-Trp, in which cleavage of the -Tyr-|-Leu- and -Tyr-|-Trp bonds also occurs).. Its function is as follows. Cleaves peptides in various proteins in a process that requires ATP hydrolysis. Has a chymotrypsin-like activity. Plays a major role in the degradation of misfolded proteins. The chain is ATP-dependent Clp protease proteolytic subunit 1 from Thermobifida fusca (strain YX).